The chain runs to 1093 residues: Receptor-mediated endocytosis protein 6 (1093 aa).

The Ras-GAP domain maps to 156–389 (LKIAQVVCNL…EMMDALLVEK (234 aa)). Disordered stretches follow at residues 547–610 (DLEK…GGEQ) and 643–669 (RSGSFVKPPPSGIPTSSSEQNLPDVAT). Composition is skewed to polar residues over residues 568-577 (IDFSSGSAET) and 584-598 (DSTSVSPEPLTSTEE). The VPS9 domain maps to 955–1093 (HHRDKLLRGT…SAVEYIKTIL (139 aa)).

The protein belongs to the GAPVD1 family. Interacts with GDP-bound rab-5. Interacts with alpha-adaptin.

The protein resides in the membrane. It localises to the cytoplasmic vesicle. Its subcellular location is the clathrin-coated vesicle. Acts both as a GTPase-activating protein (GAP) and a guanine nucleotide exchange factor (GEF), and participates in endocytosis. Acts by regulating the activation of rab-5 by exchanging bound GDP for free GTP at clathrin coated pits. The sequence is that of Receptor-mediated endocytosis protein 6 (rme-6) from Caenorhabditis elegans.